Consider the following 133-residue polypeptide: Ribosome-binding factor A (133 aa).

This sequence belongs to the RbfA family. Monomer. Binds 30S ribosomal subunits, but not 50S ribosomal subunits or 70S ribosomes.

It localises to the cytoplasm. One of several proteins that assist in the late maturation steps of the functional core of the 30S ribosomal subunit. Associates with free 30S ribosomal subunits (but not with 30S subunits that are part of 70S ribosomes or polysomes). Required for efficient processing of 16S rRNA. May interact with the 5'-terminal helix region of 16S rRNA. This chain is Ribosome-binding factor A, found in Chelativorans sp. (strain BNC1).